We begin with the raw amino-acid sequence, 92 residues long: Small ribosomal subunit protein uS19 (92 aa).

The protein belongs to the universal ribosomal protein uS19 family.

Its function is as follows. Protein S19 forms a complex with S13 that binds strongly to the 16S ribosomal RNA. In Roseobacter denitrificans (strain ATCC 33942 / OCh 114) (Erythrobacter sp. (strain OCh 114)), this protein is Small ribosomal subunit protein uS19.